We begin with the raw amino-acid sequence, 640 residues long: Chaperone protein DnaK (640 aa).

Phosphothreonine; by autocatalysis is present on Thr-199. The disordered stretch occupies residues 603–640; that stretch reads YAAGETESSAAEPGEPQEKTVDAEVVDAEFEEVKDDKK. Acidic residues predominate over residues 626-640; the sequence is EVVDAEFEEVKDDKK.

It belongs to the heat shock protein 70 family.

Acts as a chaperone. In Methylobacillus flagellatus (strain ATCC 51484 / DSM 6875 / VKM B-1610 / KT), this protein is Chaperone protein DnaK.